Here is a 99-residue protein sequence, read N- to C-terminus: UPF0729 protein CG18508 (99 aa).

Residues 60-99 are disordered; that stretch reads PGGKKTENVSDDDAEESENPPLNATAMAAETEVDESKKEI. Residues 68–77 are compositionally biased toward acidic residues; it reads VSDDDAEESE. Ser69 is modified (phosphoserine).

The protein belongs to the UPF0729 family.

This is UPF0729 protein CG18508 from Drosophila melanogaster (Fruit fly).